Reading from the N-terminus, the 301-residue chain is Glycine--tRNA ligase alpha subunit (301 aa).

The protein belongs to the class-II aminoacyl-tRNA synthetase family. Tetramer of two alpha and two beta subunits.

Its subcellular location is the cytoplasm. It carries out the reaction tRNA(Gly) + glycine + ATP = glycyl-tRNA(Gly) + AMP + diphosphate. The protein is Glycine--tRNA ligase alpha subunit of Variovorax paradoxus (strain S110).